Reading from the N-terminus, the 506-residue chain is Glutamate--tRNA ligase (506 aa).

The 'HIGH' region motif lies at 23–33 (PSPTGTPHVGL). Residues 267–271 (KLSKR) carry the 'KMSKS' region motif. An ATP-binding site is contributed by Lys-270.

It belongs to the class-I aminoacyl-tRNA synthetase family. Glutamate--tRNA ligase type 1 subfamily. Monomer.

It localises to the cytoplasm. The catalysed reaction is tRNA(Glu) + L-glutamate + ATP = L-glutamyl-tRNA(Glu) + AMP + diphosphate. Catalyzes the attachment of glutamate to tRNA(Glu) in a two-step reaction: glutamate is first activated by ATP to form Glu-AMP and then transferred to the acceptor end of tRNA(Glu). This is Glutamate--tRNA ligase from Clavibacter sepedonicus (Clavibacter michiganensis subsp. sepedonicus).